A 1047-amino-acid polypeptide reads, in one-letter code: Jouberin (1047 aa).

3 stretches are compositionally biased toward basic and acidic residues: residues 1-17, 29-40, and 77-86; these read MEPE…EKVR, SREKTGIEEKGE, and LLHDDKLASE. 2 disordered regions span residues 1–40 and 67–181; these read MEPE…EKGE and EQLT…SRDS. Residues 1 to 284 are interaction with HAP1; the sequence is MEPETPEKVD…IFNENFPYLL (284 aa). The segment covering 96-106 has biased composition (low complexity); sequence PVPTKPESSPS. Residues 115-138 are compositionally biased toward basic and acidic residues; that stretch reads GEQKKEGTPEDSQHMEGICSREQD. Positions 149–159 are enriched in basic residues; it reads PKPKKTKKKTK. Residues 172-181 are compositionally biased toward basic and acidic residues; it reads GVHEITSRDS. WD repeat units lie at residues 457–499, 502–541, 545–585, 592–631, 648–687, 691–730, and 735–776; these read AGER…FMRE, GHLN…TSTF, PHPS…DAAI, VHKS…NDVQ, FRGV…ARKF, ANYR…QVAM, and PFKS…AQQE. Ser-853 bears the Phosphoserine mark. The region spanning 902–962 is the SH3 domain; sequence DPPPMVVALY…PANHVASETL (61 aa). 2 stretches are compositionally biased toward basic and acidic residues: residues 963–987 and 1013–1040; these read YRDS…KPEK and HSEK…EPVV. The tract at residues 963 to 1047 is disordered; sequence YRDSPPKVKE…PVVRKVTLIE (85 aa). The residue at position 974 (Ser-974) is a Phosphoserine.

In terms of assembly, self-associates. Part of the tectonic-like complex (also named B9 complex). Interacts with MKS1. Interacts with NPHP1; probably as heterodimers and/or AHI1(2):NPHP1(2) heterotetramers. Interacts (via SH3 domain) with the dynamin GTPase DNM2. Interacts with HAP1; probably as AHI1(2):HAP1(2) heterotetramers. Interacts with RAB8A. Interacts with CEND1. Interacts with SPATA7. In terms of tissue distribution, expressed in the retina (at protein level). Highly expressed in the brain. Highly expressed in the testis. Expressed in the kidney, thymus, heart, lung, spleen. Weakly expressed in the liver, stomach, pancreas, and embryo. Strongly expressed during periods of both cortical and cerebellar development.

It is found in the cytoplasm. It localises to the cytoskeleton. The protein localises to the cilium basal body. The protein resides in the microtubule organizing center. Its subcellular location is the centrosome. It is found in the centriole. It localises to the cell junction. The protein localises to the adherens junction. Its function is as follows. Involved in vesicle trafficking and required for ciliogenesis, formation of primary non-motile cilium, and recruitment of RAB8A to the basal body of primary cilium. Component of the tectonic-like complex, a complex localized at the transition zone of primary cilia and acting as a barrier that prevents diffusion of transmembrane proteins between the cilia and plasma membranes. Involved in neuronal differentiation. As a positive modulator of classical Wnt signaling, may play a crucial role in ciliary signaling during cerebellum embryonic development. In Mus musculus (Mouse), this protein is Jouberin (Ahi1).